We begin with the raw amino-acid sequence, 123 residues long: Class I hydrophobin 2 (123 aa).

A signal peptide spans 1–16 (MYAYTVIAFLAASVAA). 4 cysteine pairs are disulfide-bonded: Cys35–Cys97, Cys43–Cys91, Cys44–Cys72, and Cys98–Cys116.

The protein belongs to the fungal hydrophobin family.

It localises to the secreted. The protein localises to the cell wall. Functionally, aerial growth, conidiation, and dispersal of filamentous fungi in the environment rely upon a capability of their secreting small amphipathic proteins called hydrophobins (HPBs) with low sequence identity. Class I can self-assemble into an outermost layer of rodlet bundles on aerial cell surfaces, conferring cellular hydrophobicity that supports fungal growth, development and dispersal; whereas Class II form highly ordered films at water-air interfaces through intermolecular interactions but contribute nothing to the rodlet structure. HYD1 and HYD2 are required for the structural integrity of the long aerial chains of microconidia. Does not seem to be important for the ability to cause seedling disease. This chain is Class I hydrophobin 2, found in Gibberella moniliformis (Maize ear and stalk rot fungus).